Here is a 250-residue protein sequence, read N- to C-terminus: 23S rRNA (guanine(2535)-N(1))-methyltransferase (250 aa).

The enzyme catalyses guanosine(2535) in 23S rRNA + S-adenosyl-L-methionine = N(1)-methylguanosine(2535) in 23S rRNA + S-adenosyl-L-homocysteine + H(+). Functionally, specifically methylates the guanine-2535 in 23S ribosomal RNA. Confers resistance to antibiotic avilamycin, an orthosomycin antibiotic. The chain is 23S rRNA (guanine(2535)-N(1))-methyltransferase (aviRa) from Streptomyces viridochromogenes.